We begin with the raw amino-acid sequence, 2327 residues long: Voltage-dependent N-type calcium channel subunit alpha-1B (2327 aa).

The interval M1–L37 is disordered. The Cytoplasmic segment spans residues M1–R90. Residues G10–L37 show a composition bias toward gly residues. R22 bears the Omega-N-methylarginine mark. The stretch at N82 to F359 is one I repeat. Residues I91–L114 form a helical membrane-spanning segment. Topologically, residues E115 to D131 are extracellular. A helical membrane pass occupies residues D132 to L152. At G153–R163 the chain is on the cytoplasmic side. The chain crosses the membrane as a helical span at residues N164–A182. Residues G183 to D187 are Extracellular-facing. The chain crosses the membrane as a helical span at residues L188–V211. Residues V212–V221 lie on the Cytoplasmic side of the membrane. Residues P222–F244 traverse the membrane as a helical segment. Residues Y245–W331 are Extracellular-facing. N-linked (GlcNAc...) asparagine glycosylation is present at N256. Residues N332–S356 traverse the membrane as a helical segment. Over G357–Q482 the chain is Cytoplasmic. The binding to the beta subunit stretch occupies residues Q379–E396. S411 carries the post-translational modification Phosphoserine. A451–T458 is a binding site for ATP. One copy of the II repeat lies at E468–L712. A helical transmembrane segment spans residues S483–M501. Residues V502–T511 lie on the Extracellular side of the membrane. A helical transmembrane segment spans residues T512–Y534. The Cytoplasmic portion of the chain corresponds to G535–S544. S544 serves as a coordination point for a 1,2-diacyl-sn-glycero-3-phospho-(1D-myo-inositol-4,5-bisphosphate). A helical transmembrane segment spans residues S545–I566. At K567–G573 the chain is on the extracellular side. Residues I574 to F586 form a helical membrane-spanning segment. Residues R584 and K587 each contribute to the a 1,2-diacyl-sn-glycero-3-phospho-(1D-myo-inositol-4,5-bisphosphate) site. At K587–N604 the chain is on the cytoplasmic side. The chain crosses the membrane as a helical span at residues S605–L630. Over F631–G682 the chain is Extracellular. Residues M683–V709 form a helical membrane-spanning segment. Residues D710–Y1140 are Cytoplasmic-facing. A phosphoserine mark is found at S745, S748, and S783. Disordered stretches follow at residues T802–H1015 and E1042–T1066. Composition is skewed to basic and acidic residues over residues V805–L826, E869–A885, G914–P924, G961–T972, and P988–H1015. A compositionally biased stretch (polar residues) spans Q1050 to T1066. Residue S1058 is modified to Phosphoserine. Residues N1126–F1412 form an III repeat. The helical transmembrane segment at F1141–E1159 threads the bilayer. The Extracellular portion of the chain corresponds to D1160–F1167. Residues R1168–I1192 form a helical membrane-spanning segment. At D1193 to D1206 the chain is on the cytoplasmic side. The helical transmembrane segment at L1207–G1231 threads the bilayer. Residues S1232–I1237 are Extracellular-facing. Residues N1238 to L1258 traverse the membrane as a helical segment. The Cytoplasmic segment spans residues P1259 to L1276. The helical transmembrane segment at N1277–L1296 threads the bilayer. Over F1297–M1383 the chain is Extracellular. The helical transmembrane segment at E1384–I1409 threads the bilayer. Topologically, residues I1410–P1464 are cytoplasmic. An IV repeat occupies N1449–F1702. The chain crosses the membrane as a helical span at residues P1465–M1483. Residues K1484 to E1491 are Extracellular-facing. The helical transmembrane segment at Y1492–I1516 threads the bilayer. Topologically, residues A1517–D1526 are cytoplasmic. A helical membrane pass occupies residues A1527–I1548. At A1549 to N1554 the chain is on the extracellular side. N-linked (GlcNAc...) asparagine glycosylation occurs at N1554. Residues L1555–G1573 traverse the membrane as a helical segment. Over Y1574–Y1592 the chain is Cytoplasmic. The helical transmembrane segment at V1593–F1612 threads the bilayer. Topologically, residues G1613–F1674 are extracellular. The N-linked (GlcNAc...) asparagine glycan is linked to N1666. The chain crosses the membrane as a helical span at residues A1675 to I1698. At M1699–C2327 the chain is on the cytoplasmic side. Residues H1715–P1750 form the EF-hand domain. Ca(2+) contacts are provided by D1728, R1734, and D1739. The tract at residues T1972–T2193 is disordered. The span at S2039–K2053 shows a compositional bias: basic residues. S2056 bears the Phosphoserine mark. The span at C2088–Q2104 shows a compositional bias: basic and acidic residues. Polar residues-rich tracts occupy residues P2131 to T2141 and G2152 to S2168. Phosphoserine occurs at positions 2212, 2221, and 2244. Disordered stretches follow at residues E2230 to G2249 and A2273 to S2292. Residues S2276 to S2292 show a composition bias toward low complexity.

Belongs to the calcium channel alpha-1 subunit (TC 1.A.1.11) family. CACNA1B subfamily. Multisubunit complex consisting of alpha-1, alpha-2, beta and delta subunits in a 1:1:1:1 ratio. The channel activity is directed by the pore-forming and voltage-sensitive alpha-1 subunit. In many cases, this subunit is sufficient to generate voltage-sensitive calcium channel activity. The auxiliary subunits beta and alpha-2/delta linked by a disulfide bridge regulate the channel activity. Interacts with RIMS1. Interacts with FMR1 (via C-terminus); this interaction induces a decrease in the number of presynaptic functional CACNA1B channels at the cell surface. Post-translationally, phosphorylated in vitro by CaM-kinase II, PKA, PKC and CGPK. In terms of tissue distribution, widespread expression throughout the brain. Highest levels in pyramidal cell layers C1, C2 and C3 of the hippocampus, in the dentate gyrus, in the cortex layers 2 et 4, in the subiculum and the habenula.

Its subcellular location is the membrane. It catalyses the reaction Ca(2+)(in) = Ca(2+)(out). Its activity is regulated as follows. Is specifically blocked by omega-conotoxin GVIA. Is specifically blocked by omega-conotoxin MVIIA (ziconotide). Is insensitive to dihydropyridines (DHP). In terms of biological role, voltage-sensitive calcium channels (VSCC) mediate the entry of calcium ions into excitable cells and are also involved in a variety of calcium-dependent processes, including muscle contraction, hormone or neurotransmitter release, gene expression, cell motility, cell division and cell death. This alpha-1B subunit gives rise to N-type calcium currents. N-type calcium channels belong to the 'high-voltage activated' (HVA) group. They are involved in pain signaling. Calcium channels containing alpha-1B subunit may play a role in directed migration of immature neurons. Mediates Ca(2+) release probability at hippocampal neuronal soma and synaptic terminals. The chain is Voltage-dependent N-type calcium channel subunit alpha-1B (Cacna1b) from Mus musculus (Mouse).